The following is a 666-amino-acid chain: Peptidase S41 family protein phomP1' (666 aa).

The N-terminal stretch at 1 to 27 is a signal peptide; the sequence is MSSFLVQTAVVRLFLLGVVFWFPFALS. N-linked (GlcNAc...) asparagine glycans are attached at residues N70, N214, and N234. Residues 303 to 504 form a peptidase S41 domain region; that stretch reads DVAVLQITSF…LLQAQGVRTV (202 aa). N555 and N612 each carry an N-linked (GlcNAc...) asparagine glycan.

Belongs to the peptidase S41A family.

Its pathway is mycotoxin biosynthesis. Functionally, peptidase S41 family protein; part of the gene cluster that mediates the biosynthesis of the phomopsins, a group of hexapeptide mycotoxins which infects lupins and causes lupinosis disease in livestock. Within the pathway, phomP1 and phomP1' are probably involved in the processing of the phomA and phomA' precursors. The pathway starts with the processing of the precursor phomA by several endopeptidases including kexin proteases as well as the cluster-specific S41 family peptidase phomP1 and the oligopeptidase phomG to produce 10 identical copies of the hexapeptide Tyr-Val-Ile-Pro-Ile-Asp. After being excised from the precursor peptide, the core peptides are cyclized and modified post-translationally by enzymes encoded within the gene cluster. The timing and order of proteolysis of the phomA precursor and PTMs are still unknown. Two tyrosinase-like enzymes, phomQ1 and phomQ2, catalyze the chlorination and hydroxylation of Tyr, respectively. PhomYb, is proposed to be involved in the construction of the macrocyclic structure. The other 4 ustYa family proteins may be involved in PTMs that generate the unique structure of phomopsin A. PhomYa is required for the hydroxylation of C-beta of Tyr. PhomYc, phomYd, and phomYe are responsible for the biosynthesis of 2,3-dehydroisoleucine (dIle), 2,3-dehydroaspartic acid (dAsp), and 3,4-dehydroproline (dPro), respectively. While dIle formation by phomYc is indispensable for the installation of dAsp by phomYd, the order of the other PTMs have not been elucidated yet. Most of the biosynthetic enzymes likely have broad substrate specificity, and thus, there might be a metabolic grid from a precursor to phomopsin A. The enzyme(s) responsible for the biosynthesis of 3,4-dehydrovaline (dVal) have also not been identified yet. Finally, phomM acts as an S-adenosylmethionine-dependent alpha-N-methyltransferase that catalyzes two successive N-methylation reactions, converting N-desmethyl-phomopsin A to phomopsin A and phomopsin A further to an N,N-dimethylated congener called phomopsin E. The polypeptide is Peptidase S41 family protein phomP1' (Diaporthe leptostromiformis (Lupinosis disease fungus)).